A 147-amino-acid polypeptide reads, in one-letter code: Large ribosomal subunit protein uL15 (147 aa).

A disordered region spans residues 1-46 (MSIRLENLSYTPGARKEKHRKGRGHAAGKGKQAGRGQSGQKKRSTV). Residues 16–28 (KEKHRKGRGHAAG) are compositionally biased toward basic residues.

Belongs to the universal ribosomal protein uL15 family. In terms of assembly, part of the 50S ribosomal subunit.

In terms of biological role, binds to the 23S rRNA. The protein is Large ribosomal subunit protein uL15 of Mesomycoplasma hyopneumoniae (strain J / ATCC 25934 / NCTC 10110) (Mycoplasma hyopneumoniae).